The chain runs to 695 residues: Polyribonucleotide nucleotidyltransferase (695 aa).

Positions 488 and 494 each coordinate Mg(2+). Residues 554–613 form the KH domain; sequence PKTTIIKIKTDKIRDLIGRGGETIKGIISTSCASIDVDDSGNVNIFSNNQKSFDTAVQMV. An S1 motif domain is found at 623–690; the sequence is NKVYTGKVVK…DRGRIKLSRK (68 aa).

Belongs to the polyribonucleotide nucleotidyltransferase family. In terms of assembly, component of the RNA degradosome, which is a multiprotein complex involved in RNA processing and mRNA degradation. Requires Mg(2+) as cofactor.

It is found in the cytoplasm. It carries out the reaction RNA(n+1) + phosphate = RNA(n) + a ribonucleoside 5'-diphosphate. Its function is as follows. Involved in mRNA degradation. Catalyzes the phosphorolysis of single-stranded polyribonucleotides processively in the 3'- to 5'-direction. This Vesicomyosocius okutanii subsp. Calyptogena okutanii (strain HA) protein is Polyribonucleotide nucleotidyltransferase.